The chain runs to 575 residues: MSSSDGGSSRVSIPYHLRKTLQKIREYTGKQHSDEDIFAVYKDSFNDPHETAQKLLFLDTFHEVRSKREKKKEPIVPVTQPSGRGGRRNFASSNSYQGSGRNASFKRENGANHVTRGSRTAQPATNKASNITVPNETKVSGPASIPSEVSNHKAQDDPSLISASRCSSKSDQAIEIETASKQGKNQSLPKPDVSEQSHVTFPFHLQVAKGLQNGLTFGSFDSNFVKEVSSSNGASGGYDSNFESSHGTGDDERESSPTTNGITGVASAREETSTVSEDKDYGISNSATGAEPVVHSDHIVPPVEEVPKEEALSNTETHQIAYGQEAPLSVFGLVPSLSAIGQPVNTEAAETQPGNSNSPPISLVSYPPDQSSIAAATQQTNFLRQQYPPNFFPYGYYSPYYMPPPYIHQFLSPNGIPQQSYFPQGAALTAPSHAKPVDNTENPPTTNPYLHTSPMVASSIPSTTTLNSIHSEEKASHLTESAAAWIGQGFGNLQVNPMYNLAYQGQPLGFPVVQAGHGGLMGMHQPTQPMAAASTTYQTLPPPPHTTTAMGEPIGHPHIAYQQPQAALTNWVNNY.

Disordered stretches follow at residues 66 to 171 and 229 to 296; these read SKRE…SKSD and SSSN…VVHS. Polar residues-rich tracts occupy residues 90 to 102, 115 to 138, and 161 to 171; these read FASS…SGRN, TRGS…NETK, and ISASRCSSKSD. The span at 268–281 shows a compositional bias: basic and acidic residues; sequence AREETSTVSEDKDY.

It belongs to the GIP1 family. As to expression, expressed in roots, leaves, stems and flowers.

It localises to the nucleus. Its function is as follows. May act as a transcriptional coactivator of LOB domain-containing proteins. The sequence is that of GBF-interacting protein 1-like from Arabidopsis thaliana (Mouse-ear cress).